The primary structure comprises 157 residues: Protein NrdI (157 aa).

This sequence belongs to the NrdI family.

In terms of biological role, probably involved in ribonucleotide reductase function. The polypeptide is Protein NrdI (Mycoplasma mycoides subsp. mycoides SC (strain CCUG 32753 / NCTC 10114 / PG1)).